Consider the following 484-residue polypeptide: tRNA sulfurtransferase (484 aa).

Residues Lys-63–Gln-167 enclose the THUMP domain. ATP contacts are provided by residues Leu-185–Met-186, Lys-267, Gly-289, and Gln-298. An intrachain disulfide couples Cys-346 to Cys-457. The region spanning Ala-405–Pro-483 is the Rhodanese domain. Cys-457 acts as the Cysteine persulfide intermediate in catalysis.

Belongs to the ThiI family.

The protein resides in the cytoplasm. The enzyme catalyses [ThiI sulfur-carrier protein]-S-sulfanyl-L-cysteine + a uridine in tRNA + 2 reduced [2Fe-2S]-[ferredoxin] + ATP + H(+) = [ThiI sulfur-carrier protein]-L-cysteine + a 4-thiouridine in tRNA + 2 oxidized [2Fe-2S]-[ferredoxin] + AMP + diphosphate. The catalysed reaction is [ThiS sulfur-carrier protein]-C-terminal Gly-Gly-AMP + S-sulfanyl-L-cysteinyl-[cysteine desulfurase] + AH2 = [ThiS sulfur-carrier protein]-C-terminal-Gly-aminoethanethioate + L-cysteinyl-[cysteine desulfurase] + A + AMP + 2 H(+). It participates in cofactor biosynthesis; thiamine diphosphate biosynthesis. Its function is as follows. Catalyzes the ATP-dependent transfer of a sulfur to tRNA to produce 4-thiouridine in position 8 of tRNAs, which functions as a near-UV photosensor. Also catalyzes the transfer of sulfur to the sulfur carrier protein ThiS, forming ThiS-thiocarboxylate. This is a step in the synthesis of thiazole, in the thiamine biosynthesis pathway. The sulfur is donated as persulfide by IscS. This is tRNA sulfurtransferase from Pseudomonas fluorescens (strain Pf0-1).